Consider the following 299-residue polypeptide: Elongation factor Ts (299 aa).

Residues 81 to 84 (TDFV) form an involved in Mg(2+) ion dislocation from EF-Tu region.

It belongs to the EF-Ts family.

It is found in the cytoplasm. Functionally, associates with the EF-Tu.GDP complex and induces the exchange of GDP to GTP. It remains bound to the aminoacyl-tRNA.EF-Tu.GTP complex up to the GTP hydrolysis stage on the ribosome. In Halothermothrix orenii (strain H 168 / OCM 544 / DSM 9562), this protein is Elongation factor Ts.